The chain runs to 256 residues: Triosephosphate isomerase (256 aa).

9 to 11 is a substrate binding site; sequence NWK. His-95 acts as the Electrophile in catalysis. Glu-167 (proton acceptor) is an active-site residue. Residues Gly-173, Ser-213, and 234–235 each bind substrate; that span reads GG.

This sequence belongs to the triosephosphate isomerase family. Homodimer.

It localises to the cytoplasm. It carries out the reaction D-glyceraldehyde 3-phosphate = dihydroxyacetone phosphate. The protein operates within carbohydrate biosynthesis; gluconeogenesis. It functions in the pathway carbohydrate degradation; glycolysis; D-glyceraldehyde 3-phosphate from glycerone phosphate: step 1/1. Functionally, involved in the gluconeogenesis. Catalyzes stereospecifically the conversion of dihydroxyacetone phosphate (DHAP) to D-glyceraldehyde-3-phosphate (G3P). The chain is Triosephosphate isomerase from Symbiobacterium thermophilum (strain DSM 24528 / JCM 14929 / IAM 14863 / T).